The primary structure comprises 96 residues: Protein RnfH (96 aa).

It belongs to the UPF0125 (RnfH) family.

The sequence is that of Protein RnfH from Escherichia coli O81 (strain ED1a).